Reading from the N-terminus, the 460-residue chain is Protein btn1 (460 aa).

Helical transmembrane passes span 42-62 (VCVA…VILS), 76-96 (VVLL…PYFI), 105-125 (IIIF…SPPY), 135-155 (LAGI…FVGL), 164-184 (LAAW…AYAL), 195-215 (ATLL…FMVL), 287-307 (GLFF…YTIN), 323-343 (FAHF…GVFI), 356-376 (LYLP…QAVF), 378-398 (FIPS…LGGL), and 428-448 (AAGI…LCDW).

It belongs to the battenin family.

It is found in the vacuole membrane. In terms of biological role, involved in vacuolar transport and vacuole pH homeostasis. Also required for cytokinesis. This Aspergillus fumigatus (strain ATCC MYA-4609 / CBS 101355 / FGSC A1100 / Af293) (Neosartorya fumigata) protein is Protein btn1 (btn1).